Here is a 444-residue protein sequence, read N- to C-terminus: DNA repair protein RadA (444 aa).

Residues 10–27 (CQECGYKSVKWLGKCPSC) form a C4-type zinc finger. 91 to 98 (GEPGIGKS) contacts ATP. The RadA KNRFG motif signature appears at 247-251 (KNRFG). Positions 345 to 444 (DVFVNVAGGM…HIQEAIEVLF (100 aa)) are lon-protease-like.

The protein belongs to the RecA family. RadA subfamily.

In terms of biological role, DNA-dependent ATPase involved in processing of recombination intermediates, plays a role in repairing DNA breaks. Stimulates the branch migration of RecA-mediated strand transfer reactions, allowing the 3' invading strand to extend heteroduplex DNA faster. Binds ssDNA in the presence of ADP but not other nucleotides, has ATPase activity that is stimulated by ssDNA and various branched DNA structures, but inhibited by SSB. Does not have RecA's homology-searching function. The polypeptide is DNA repair protein RadA (Aquifex aeolicus (strain VF5)).